The sequence spans 571 residues: Endonuclease/exonuclease/phosphatase family domain-containing protein 1 (571 aa).

The tract at residues 1–20 (MGSTLGCHRSIPRDPSDLSH) is disordered. The N-myristoyl glycine moiety is linked to residue glycine 2. Residues 11–20 (IPRDPSDLSH) show a composition bias toward basic and acidic residues. Phosphoserine occurs at positions 16, 21, and 25. The HhH domain occupies 38 to 67 (ERLNINTATEEELMTLPGVTRAVARSIVEY). Serine 106, serine 110, serine 162, and serine 175 each carry phosphoserine. Residues 202 to 227 (SRPPSTHTNGGLTFTAKPHPSPTSLS) are disordered. Over residues 204–213 (PPSTHTNGGL) the composition is skewed to polar residues. The residue at position 267 (threonine 267) is a Phosphothreonine. Residue serine 430 is modified to Phosphoserine. The segment at 548-571 (RKEGPRSGNGLTLERSEANIKHER) is disordered. Residues 561–571 (ERSEANIKHER) show a composition bias toward basic and acidic residues.

The protein is Endonuclease/exonuclease/phosphatase family domain-containing protein 1 (EEPD1) of Bos taurus (Bovine).